Reading from the N-terminus, the 445-residue chain is Trigger factor (445 aa).

A PPIase FKBP-type domain is found at 162–247 (GDQVTIDAIG…IKAVHTAEPT (86 aa)).

Belongs to the FKBP-type PPIase family. Tig subfamily.

It is found in the cytoplasm. It carries out the reaction [protein]-peptidylproline (omega=180) = [protein]-peptidylproline (omega=0). Involved in protein export. Acts as a chaperone by maintaining the newly synthesized protein in an open conformation. Functions as a peptidyl-prolyl cis-trans isomerase. The chain is Trigger factor from Rickettsia akari (strain Hartford).